The primary structure comprises 234 residues: Adenosine 5'-phosphosulfate reductase (234 aa).

4 residues coordinate [4Fe-4S] cluster: cysteine 120, cysteine 121, cysteine 203, and cysteine 206. Cysteine 229 (nucleophile; cysteine thiosulfonate intermediate) is an active-site residue.

The protein belongs to the PAPS reductase family. CysH subfamily. The cofactor is [4Fe-4S] cluster.

It is found in the cytoplasm. The enzyme catalyses [thioredoxin]-disulfide + sulfite + AMP + 2 H(+) = adenosine 5'-phosphosulfate + [thioredoxin]-dithiol. The protein operates within sulfur metabolism; hydrogen sulfide biosynthesis; sulfite from sulfate. Catalyzes the formation of sulfite from adenosine 5'-phosphosulfate (APS) using thioredoxin as an electron donor. In Bacillus mycoides (strain KBAB4) (Bacillus weihenstephanensis), this protein is Adenosine 5'-phosphosulfate reductase.